Reading from the N-terminus, the 336-residue chain is Holliday junction branch migration complex subunit RuvB (336 aa).

Positions 4–184 (ADRLVAPGSI…FGIVQRLEFY (181 aa)) are large ATPase domain (RuvB-L). ATP is bound by residues I23, R24, G65, K68, T69, T70, 131–133 (EDY), R174, Y184, and R221. T69 contributes to the Mg(2+) binding site. The interval 185–255 (QVADLQHIVS…VASQALDMLN (71 aa)) is small ATPAse domain (RuvB-S). Residues 258 to 336 (AEGFDYMDRK…HFGITPPQMP (79 aa)) are head domain (RuvB-H). 3 residues coordinate DNA: R294, R313, and R318.

Belongs to the RuvB family. In terms of assembly, homohexamer. Forms an RuvA(8)-RuvB(12)-Holliday junction (HJ) complex. HJ DNA is sandwiched between 2 RuvA tetramers; dsDNA enters through RuvA and exits via RuvB. An RuvB hexamer assembles on each DNA strand where it exits the tetramer. Each RuvB hexamer is contacted by two RuvA subunits (via domain III) on 2 adjacent RuvB subunits; this complex drives branch migration. In the full resolvosome a probable DNA-RuvA(4)-RuvB(12)-RuvC(2) complex forms which resolves the HJ.

The protein resides in the cytoplasm. The enzyme catalyses ATP + H2O = ADP + phosphate + H(+). Its function is as follows. The RuvA-RuvB-RuvC complex processes Holliday junction (HJ) DNA during genetic recombination and DNA repair, while the RuvA-RuvB complex plays an important role in the rescue of blocked DNA replication forks via replication fork reversal (RFR). RuvA specifically binds to HJ cruciform DNA, conferring on it an open structure. The RuvB hexamer acts as an ATP-dependent pump, pulling dsDNA into and through the RuvAB complex. RuvB forms 2 homohexamers on either side of HJ DNA bound by 1 or 2 RuvA tetramers; 4 subunits per hexamer contact DNA at a time. Coordinated motions by a converter formed by DNA-disengaged RuvB subunits stimulates ATP hydrolysis and nucleotide exchange. Immobilization of the converter enables RuvB to convert the ATP-contained energy into a lever motion, pulling 2 nucleotides of DNA out of the RuvA tetramer per ATP hydrolyzed, thus driving DNA branch migration. The RuvB motors rotate together with the DNA substrate, which together with the progressing nucleotide cycle form the mechanistic basis for DNA recombination by continuous HJ branch migration. Branch migration allows RuvC to scan DNA until it finds its consensus sequence, where it cleaves and resolves cruciform DNA. This chain is Holliday junction branch migration complex subunit RuvB, found in Cronobacter sakazakii (strain ATCC BAA-894) (Enterobacter sakazakii).